Consider the following 233-residue polypeptide: MSTESMIRDVELAEEALSKTAGGSQGSGRCLCLSLFSFFLVAGGTTLFCLLHFGVIGPQREEFPTGYSIISPLAQTLRSSSKTSSNKPVAHVVANLSAQGQLRWLNTYANTLLANSVKLEDNQLVVPTDGLYLIYSQVLFRGQGCPSTHLFLTHTISRIAVSYQTKVNLLSAIKSPCQRETPEGAEAKPWYEPIYQGGVFQLEKGDRLSAEINLPDYLDFAESGQVYFGIIAL.

At 1–35 the chain is on the cytoplasmic side; the sequence is MSTESMIRDVELAEEALSKTAGGSQGSGRCLCLSL. S2 bears the Phosphoserine; by CK1 mark. A lipid anchor (N6-myristoyl lysine) is attached at K19. Residues 36 to 56 form a helical; Signal-anchor for type II membrane protein membrane-spanning segment; that stretch reads FSFFLVAGGTTLFCLLHFGVI. Over 57–233 the chain is Extracellular; that stretch reads GPQREEFPTG…GQVYFGIIAL (177 aa). The O-linked (GalNAc...) serine; in soluble form glycan is linked to S80. The THD domain occupies 88-233; that stretch reads PVAHVVANLS…GQVYFGIIAL (146 aa). N95 carries an N-linked (GlcNAc...) asparagine glycan. C145 and C177 are disulfide-bonded.

Belongs to the tumor necrosis factor family. In terms of assembly, homotrimer. Interacts with SPPL2B. In terms of processing, the soluble form derives from the membrane form by proteolytic processing. The membrane-bound form is further proteolytically processed by SPPL2A or SPPL2B through regulated intramembrane proteolysis producing TNF intracellular domains (ICD1 and ICD2) released in the cytosol and TNF C-domain 1 and C-domain 2 secreted into the extracellular space. The membrane form, but not the soluble form, is phosphorylated on serine residues. Dephosphorylation of the membrane form occurs by binding to soluble TNFRSF1A/TNFR1. Post-translationally, O-glycosylated; glycans contain galactose, N-acetylgalactosamine and N-acetylneuraminic acid. In terms of processing, the soluble form is demyristoylated by SIRT6, promoting its secretion.

The protein resides in the cell membrane. Its subcellular location is the membrane. The protein localises to the secreted. Its function is as follows. Cytokine that binds to TNFRSF1A/TNFR1 and TNFRSF1B/TNFBR. It is mainly secreted by macrophages and can induce cell death of certain tumor cell lines. It is potent pyrogen causing fever by direct action or by stimulation of interleukin-1 secretion and is implicated in the induction of cachexia, Under certain conditions it can stimulate cell proliferation and induce cell differentiation. Induces insulin resistance in adipocytes via inhibition of insulin-induced IRS1 tyrosine phosphorylation and insulin-induced glucose uptake. Induces GKAP42 protein degradation in adipocytes which is partially responsible for TNF-induced insulin resistance. Plays a role in angiogenesis by inducing VEGF production synergistically with IL1B and IL6. In terms of biological role, the TNF intracellular domain (ICD) form induces IL12 production in dendritic cells. In Delphinapterus leucas (Beluga whale), this protein is Tumor necrosis factor (TNF).